The chain runs to 528 residues: Na(+)/H(+) antiporter NhaB (528 aa).

Transmembrane regions (helical) follow at residues 20-39, 66-86, 97-117, 139-159, 241-261, 304-324, 349-369, 390-410, 448-468, and 476-496; these read WFKI…FYFN, PGGL…SQVL, LLLV…LFVF, AFLS…TVAV, IRMS…CFLV, AVIG…VGLI, EEAL…AVII, LVIF…VFVG, ATPN…APLI, and VWMA…AIQL.

This sequence belongs to the NhaB Na(+)/H(+) (TC 2.A.34) antiporter family.

The protein localises to the cell inner membrane. It carries out the reaction 2 Na(+)(in) + 3 H(+)(out) = 2 Na(+)(out) + 3 H(+)(in). In terms of biological role, na(+)/H(+) antiporter that extrudes sodium in exchange for external protons. In Shewanella pealeana (strain ATCC 700345 / ANG-SQ1), this protein is Na(+)/H(+) antiporter NhaB.